The sequence spans 280 residues: Putative pyruvate, phosphate dikinase regulatory protein (280 aa).

G153–T160 is an ADP binding site.

The protein belongs to the pyruvate, phosphate/water dikinase regulatory protein family. PDRP subfamily.

It carries out the reaction N(tele)-phospho-L-histidyl/L-threonyl-[pyruvate, phosphate dikinase] + ADP = N(tele)-phospho-L-histidyl/O-phospho-L-threonyl-[pyruvate, phosphate dikinase] + AMP + H(+). The catalysed reaction is N(tele)-phospho-L-histidyl/O-phospho-L-threonyl-[pyruvate, phosphate dikinase] + phosphate + H(+) = N(tele)-phospho-L-histidyl/L-threonyl-[pyruvate, phosphate dikinase] + diphosphate. Functionally, bifunctional serine/threonine kinase and phosphorylase involved in the regulation of the pyruvate, phosphate dikinase (PPDK) by catalyzing its phosphorylation/dephosphorylation. The protein is Putative pyruvate, phosphate dikinase regulatory protein of Bartonella quintana (strain Toulouse) (Rochalimaea quintana).